Reading from the N-terminus, the 272-residue chain is Shikimate dehydrogenase (NADP(+)) (272 aa).

Shikimate is bound by residues 14 to 16 (SKS) and Thr61. The Proton acceptor role is filled by Lys65. Position 77 (Glu77) interacts with NADP(+). The shikimate site is built by Asn86 and Asp102. Residues 126–130 (GAGGA), 149–154 (NRTVSR), and Met213 contribute to the NADP(+) site. Residue Tyr215 coordinates shikimate. Gly237 contacts NADP(+).

The protein belongs to the shikimate dehydrogenase family. Homodimer.

The catalysed reaction is shikimate + NADP(+) = 3-dehydroshikimate + NADPH + H(+). It participates in metabolic intermediate biosynthesis; chorismate biosynthesis; chorismate from D-erythrose 4-phosphate and phosphoenolpyruvate: step 4/7. Functionally, involved in the biosynthesis of the chorismate, which leads to the biosynthesis of aromatic amino acids. Catalyzes the reversible NADPH linked reduction of 3-dehydroshikimate (DHSA) to yield shikimate (SA). In Escherichia coli (strain K12 / MC4100 / BW2952), this protein is Shikimate dehydrogenase (NADP(+)).